A 1467-amino-acid chain; its full sequence is Helicase ARIP4 (1467 aa).

Disordered regions lie at residues methionine 1–proline 150 and aspartate 186–histidine 234. Positions proline 11–serine 49 are enriched in acidic residues. Positions threonine 72–serine 82 are enriched in low complexity. Basic residues predominate over residues lysine 100–lysine 115. Glycyl lysine isopeptide (Lys-Gly) (interchain with G-Cter in SUMO2) cross-links involve residues lysine 115 and lysine 127. Basic and acidic residues-rich tracts occupy residues glutamate 133–tyrosine 147 and glutamate 192–valine 201. Lysine 272 participates in a covalent cross-link: Glycyl lysine isopeptide (Lys-Gly) (interchain with G-Cter in SUMO2). Residues arginine 292–aspartate 512 enclose the Helicase ATP-binding domain. ATP is bound at residue histidine 305–threonine 312. The DEAH box signature appears at aspartate 463–histidine 466. Positions leucine 551–leucine 555 match the LXXLL motif 1 motif. The tract at residues glycine 649–serine 673 is disordered. Glycyl lysine isopeptide (Lys-Gly) (interchain with G-Cter in SUMO2) cross-links involve residues lysine 665, lysine 682, lysine 759, lysine 901, lysine 1014, and lysine 1018. A Helicase C-terminal domain is found at histidine 728 to leucine 896. Residues arginine 1120–aspartate 1171 are disordered. Positions serine 1136 to serine 1155 are enriched in polar residues. 2 positions are modified to phosphoserine: serine 1169 and serine 1172. Disordered stretches follow at residues aspartate 1184–glycine 1221 and proline 1247–tyrosine 1284. Position 1260 is a phosphothreonine (threonine 1260). An LXXLL motif 2 motif is present at residues leucine 1329–leucine 1333. Residues alanine 1445–lysine 1467 form a disordered region. Over residues asparagine 1452–lysine 1467 the composition is skewed to acidic residues.

This sequence belongs to the SNF2/RAD54 helicase family. As to quaternary structure, interacts with AR via its N-terminus. Interacts with DYRK1A. Binds DNA and mononucleosomes, but does not seem to form large multiprotein complexes. In terms of processing, sumoylated.

It localises to the nucleus. It catalyses the reaction ATP + H2O = ADP + phosphate + H(+). Its activity is regulated as follows. Enzyme activity is enhanced by dsDNA (double-stranded DNA) and ssDNA (single-stranded DNA). In terms of biological role, DNA helicase that modulates androgen receptor (AR)-dependent transactivation in a promoter-dependent manner. Not able to remodel mononucleosomes in vitro. The protein is Helicase ARIP4 (RAD54L2) of Homo sapiens (Human).